The following is a 582-amino-acid chain: ATP-dependent lipid A-core flippase (582 aa).

5 helical membrane-spanning segments follow: residues 16 to 36 (LWPM…ALIL), 63 to 83 (ILVW…VSGF), 153 to 173 (IIGL…ILVV), 253 to 273 (PLIQ…ASFP), and 275 to 295 (VMET…IALM). The region spanning 28–310 (IVAAIALILN…LTNVNAQFQR (283 aa)) is the ABC transmembrane type-1 domain. The ABC transporter domain occupies 342-578 (IAFDHVTFSY…QGVYAQLHQL (237 aa)). Position 376–383 (376–383 (GRSGSGKS)) interacts with ATP.

This sequence belongs to the ABC transporter superfamily. Lipid exporter (TC 3.A.1.106) family. In terms of assembly, homodimer.

The protein localises to the cell inner membrane. The enzyme catalyses ATP + H2O + lipid A-core oligosaccharideSide 1 = ADP + phosphate + lipid A-core oligosaccharideSide 2.. Involved in lipopolysaccharide (LPS) biosynthesis. Translocates lipid A-core from the inner to the outer leaflet of the inner membrane. Transmembrane domains (TMD) form a pore in the inner membrane and the ATP-binding domain (NBD) is responsible for energy generation. The protein is ATP-dependent lipid A-core flippase of Sodalis glossinidius (strain morsitans).